A 760-amino-acid polypeptide reads, in one-letter code: Serine/threonine-protein kinase PknG (760 aa).

Residues 1–31 (MTSPENPDLPDADDAYVDSGPGTQPASLEDL) are disordered. The Protein kinase domain occupies 161–403 (YEIKGCIAHG…SAEEMSSQLL (243 aa)). Residues 167–175 (IAHGGLGWV) and Lys-191 contribute to the ATP site. Asp-286 acts as the Proton acceptor in catalysis.

It belongs to the protein kinase superfamily. Ser/Thr protein kinase family. Interacts with GarA in vitro.

The enzyme catalyses L-seryl-[protein] + ATP = O-phospho-L-seryl-[protein] + ADP + H(+). It carries out the reaction L-threonyl-[protein] + ATP = O-phospho-L-threonyl-[protein] + ADP + H(+). The chain is Serine/threonine-protein kinase PknG (pknG) from Mycolicibacterium smegmatis (strain ATCC 700084 / mc(2)155) (Mycobacterium smegmatis).